The sequence spans 1053 residues: Translation initiation factor IF-2 (1053 aa).

Residues 1-20 show a composition bias toward polar residues; it reads MSESKNSGENTLSVTPTKTL. Residues 1–442 form a disordered region; sequence MSESKNSGEN…TATGGEEEER (442 aa). Composition is skewed to low complexity over residues 64-76 and 83-102; these read EAAP…ATVT and RPAA…AAVP. Composition is skewed to pro residues over residues 131 to 141 and 150 to 161; these read PAQPKAEPVPA and APVPPVPAPSAP. Over residues 178-220 the composition is skewed to low complexity; that stretch reads PVSQAKPIQTAPVQTAPAAQASASQTTGPRPVAAGPRPATGAA. The span at 255 to 264 shows a compositional bias: gly residues; the sequence is GGRGGPGRGE. Basic and acidic residues-rich tracts occupy residues 279–288 and 295–353; these read LTDEEREARA and RIRE…EAKR. A compositionally biased stretch (low complexity) spans 375 to 386; the sequence is TATAAAPAAAAP. Positions 550–720 constitute a tr-type G domain; the sequence is PRPPVVTIMG…ALQAELLDLK (171 aa). The interval 559–566 is G1; the sequence is GHVDHGKT. A GTP-binding site is contributed by 559–566; it reads GHVDHGKT. The G2 stretch occupies residues 584-588; it reads GITQH. Residues 606-609 are G3; that stretch reads DTPG. Residues 606-610 and 660-663 each bind GTP; these read DTPGH and NKID. The G4 stretch occupies residues 660-663; the sequence is NKID. The segment at 696 to 698 is G5; that stretch reads SAT.

The protein belongs to the TRAFAC class translation factor GTPase superfamily. Classic translation factor GTPase family. IF-2 subfamily.

It is found in the cytoplasm. In terms of biological role, one of the essential components for the initiation of protein synthesis. Protects formylmethionyl-tRNA from spontaneous hydrolysis and promotes its binding to the 30S ribosomal subunits. Also involved in the hydrolysis of GTP during the formation of the 70S ribosomal complex. The sequence is that of Translation initiation factor IF-2 from Beijerinckia indica subsp. indica (strain ATCC 9039 / DSM 1715 / NCIMB 8712).